Here is a 565-residue protein sequence, read N- to C-terminus: Sulfite reductase [NADPH] hemoprotein beta-component (565 aa).

[4Fe-4S] cluster-binding residues include cysteine 429, cysteine 435, cysteine 474, and cysteine 478. Cysteine 478 contacts siroheme.

It belongs to the nitrite and sulfite reductase 4Fe-4S domain family. Alpha(8)-beta(8). The alpha component is a flavoprotein, the beta component is a hemoprotein. Requires siroheme as cofactor. The cofactor is [4Fe-4S] cluster.

It catalyses the reaction hydrogen sulfide + 3 NADP(+) + 3 H2O = sulfite + 3 NADPH + 4 H(+). The protein operates within sulfur metabolism; hydrogen sulfide biosynthesis; hydrogen sulfide from sulfite (NADPH route): step 1/1. Its function is as follows. Component of the sulfite reductase complex that catalyzes the 6-electron reduction of sulfite to sulfide. This is one of several activities required for the biosynthesis of L-cysteine from sulfate. The chain is Sulfite reductase [NADPH] hemoprotein beta-component from Shewanella baltica (strain OS185).